We begin with the raw amino-acid sequence, 81 residues long: Protein Vpu (81 aa).

Residues 1–7 are Extracellular-facing; sequence MQPLQIL. Residues 8–28 form a helical membrane-spanning segment; it reads SIVALVVAAIIAIVVWSIVFI. The Cytoplasmic portion of the chain corresponds to 29–81; that stretch reads LIRKILRQRKIDRLIDRIRERAEDSGNESEGIRKELSALVEMGHDAPGDIDDL. 2 positions are modified to phosphoserine; by host CK2: serine 53 and serine 57.

This sequence belongs to the HIV-1 VPU protein family. As to quaternary structure, homopentamer. Interacts with host CD4 and BRTC; these interactions induce proteasomal degradation of CD4. Interacts with host BST2; this interaction leads to the degradation of host BST2. Interacts with host FBXW11. Interacts with host AP1M1; this interaction plays a role in the mistrafficking and subsequent degradation of host BST2. Interacts with host RANBP2; this interaction allows Vpu to down-regulate host BLM sumoylation. Phosphorylated by host CK2. This phosphorylation is necessary for interaction with human BTRC and degradation of CD4.

It localises to the host membrane. With respect to regulation, ion channel activity is inhibited by hexamethylene amiloride in vitro. Functionally, enhances virion budding by targeting host CD4 and Tetherin/BST2 to proteasome degradation. Degradation of CD4 prevents any unwanted premature interactions between viral Env and its host receptor CD4 in the endoplasmic reticulum. Degradation of antiretroviral protein Tetherin/BST2 is important for virion budding, as BST2 tethers new viral particles to the host cell membrane. Mechanistically, Vpu bridges either CD4 or BST2 to BTRC, a substrate recognition subunit of the Skp1/Cullin/F-box protein E3 ubiquitin ligase, induces their ubiquitination and subsequent proteasomal degradation. The alteration of the E3 ligase specificity by Vpu seems to promote the degradation of host IKBKB, leading to NF-kappa-B down-regulation and subsequent apoptosis. Acts as a viroporin that forms an oligomeric ion channel in membranes. Modulates the host DNA repair mechanisms to promote degradation of nuclear viral cDNA in cells that are already productively infected in order to suppress immune sensing and proviral hyper-integration (superinfection). Manipulates PML-NBs and modulates SUMOylation of host BLM protein thereby enhancing its DNA-end processing activity toward viral unintegrated linear DNA. Also inhibits RAD52-mediated homologous repair of viral cDNA, preventing the generation of dead-end circular forms of single copies of the long terminal repeat and permitting sustained nucleolytic attack. This Homo sapiens (Human) protein is Protein Vpu.